The sequence spans 366 residues: Beta sliding clamp (366 aa).

This sequence belongs to the beta sliding clamp family. As to quaternary structure, forms a ring-shaped head-to-tail homodimer around DNA which binds and tethers DNA polymerases and other proteins to the DNA. The DNA replisome complex has a single clamp-loading complex (3 tau and 1 each of delta, delta', psi and chi subunits) which binds 3 Pol III cores (1 core on the leading strand and 2 on the lagging strand) each with a beta sliding clamp dimer. Additional proteins in the replisome are other copies of gamma, psi and chi, Ssb, DNA helicase and RNA primase.

It is found in the cytoplasm. Confers DNA tethering and processivity to DNA polymerases and other proteins. Acts as a clamp, forming a ring around DNA (a reaction catalyzed by the clamp-loading complex) which diffuses in an ATP-independent manner freely and bidirectionally along dsDNA. Initially characterized for its ability to contact the catalytic subunit of DNA polymerase III (Pol III), a complex, multichain enzyme responsible for most of the replicative synthesis in bacteria; Pol III exhibits 3'-5' exonuclease proofreading activity. The beta chain is required for initiation of replication as well as for processivity of DNA replication. The polypeptide is Beta sliding clamp (dnaN) (Chlamydia pneumoniae (Chlamydophila pneumoniae)).